The sequence spans 997 residues: NLR family CARD domain-containing protein 4 (997 aa).

Residues 1-88 (MDLIRKNYAE…FFYEDLIGQR (88 aa)) form the CARD domain. The nucleotide-binding domain (NBD) stretch occupies residues 95–300 (EEDLENLADH…RCGALIAETS (206 aa)). Residues 165-478 (SPCVIEGEAG…VTKGEDFLNK (314 aa)) form the NACHT domain. An ATP-binding site is contributed by 171–178 (GEAGKGKT). The tract at residues 358 to 465 (MNTQTTLFST…RLSQLLSSED (108 aa)) is winged-helix domain (WHD). LRR repeat units follow at residues 550-570 (LFSE…HIEF), 629-652 (NQSI…DIKY), 708-731 (MTEM…LLEG), 735-758 (LVGL…TLAE), 760-785 (ILSL…ESIA), 797-820 (ELKL…LYSL), 821-843 (SHIE…SVEE), 851-875 (LDAI…VLPT), 884-905 (ELAF…SYIN), 908-935 (FENL…ILQY), 937-958 (PNLT…DLVR), and 972-994 (TMEL…AKNM).

Its subcellular location is the cytoplasm. The protein localises to the cytosol. Key component of inflammasomes that indirectly senses specific proteins from pathogenic bacteria and fungi and responds by assembling an inflammasome complex that promotes caspase-1 activation, cytokine production and macrophage pyroptosis. The chain is NLR family CARD domain-containing protein 4 (nlrc4) from Xenopus tropicalis (Western clawed frog).